A 145-amino-acid polypeptide reads, in one-letter code: D-aminoacyl-tRNA deacylase (145 aa).

Positions 137-138 (GP) match the Gly-cisPro motif, important for rejection of L-amino acids motif.

This sequence belongs to the DTD family. As to quaternary structure, homodimer.

It is found in the cytoplasm. It catalyses the reaction glycyl-tRNA(Ala) + H2O = tRNA(Ala) + glycine + H(+). The enzyme catalyses a D-aminoacyl-tRNA + H2O = a tRNA + a D-alpha-amino acid + H(+). Functionally, an aminoacyl-tRNA editing enzyme that deacylates mischarged D-aminoacyl-tRNAs. Also deacylates mischarged glycyl-tRNA(Ala), protecting cells against glycine mischarging by AlaRS. Acts via tRNA-based rather than protein-based catalysis; rejects L-amino acids rather than detecting D-amino acids in the active site. By recycling D-aminoacyl-tRNA to D-amino acids and free tRNA molecules, this enzyme counteracts the toxicity associated with the formation of D-aminoacyl-tRNA entities in vivo and helps enforce protein L-homochirality. The chain is D-aminoacyl-tRNA deacylase from Shewanella halifaxensis (strain HAW-EB4).